Consider the following 317-residue polypeptide: Beta-ketoacyl-[acyl-carrier-protein] synthase III (317 aa).

Catalysis depends on residues cysteine 112 and histidine 244. The ACP-binding stretch occupies residues 245–249; that stretch reads QANVR. The active site involves asparagine 274.

It belongs to the thiolase-like superfamily. FabH family. Homodimer.

It is found in the cytoplasm. It carries out the reaction malonyl-[ACP] + acetyl-CoA + H(+) = 3-oxobutanoyl-[ACP] + CO2 + CoA. The protein operates within lipid metabolism; fatty acid biosynthesis. In terms of biological role, catalyzes the condensation reaction of fatty acid synthesis by the addition to an acyl acceptor of two carbons from malonyl-ACP. Catalyzes the first condensation reaction which initiates fatty acid synthesis and may therefore play a role in governing the total rate of fatty acid production. Possesses both acetoacetyl-ACP synthase and acetyl transacylase activities. Its substrate specificity determines the biosynthesis of branched-chain and/or straight-chain of fatty acids. In Rickettsia canadensis (strain McKiel), this protein is Beta-ketoacyl-[acyl-carrier-protein] synthase III.